The chain runs to 294 residues: Nucleotide-binding protein CLL_A3342 (294 aa).

An ATP-binding site is contributed by 8–15; it reads GLSGAGKT. 59–62 is a GTP binding site; that stretch reads DIRG.

The protein belongs to the RapZ-like family.

Functionally, displays ATPase and GTPase activities. The sequence is that of Nucleotide-binding protein CLL_A3342 from Clostridium botulinum (strain Eklund 17B / Type B).